The following is a 1481-amino-acid chain: Nucleoporin NUP159 (1481 aa).

WD repeat units lie at residues 106–146 (PLPL…QGNT) and 201–241 (TLRS…AHIP). PXFG repeat units follow at residues 483-486 (PTFG), 493-496 (PAFG), 519-522 (PTFG), 524-527 (PSFG), 532-535 (PAFG), and 559-562 (PAFG). The segment covering 607-616 (GSSIFSSKPG) has biased composition (low complexity). 2 disordered regions span residues 607-647 (GSSI…PAFG) and 662-991 (TAAH…SLGG). The PXFG 7 repeat unit spans residues 644–647 (PAFG). Over residues 663–677 (AAHDIEKPKEGESKS) the composition is skewed to basic and acidic residues. Polar residues-rich tracts occupy residues 724–734 (FESTTPTTTPA) and 741–763 (KTTTPSGFSTLLGSTKPVASSMP). Over residues 773–794 (SAEKPKSIFDTLKPKEESKENL) the composition is skewed to basic and acidic residues. Residues 814–833 (PGSSSSESAESSPGAAAKAA) are compositionally biased toward low complexity. 2 stretches are compositionally biased toward basic and acidic residues: residues 837–850 (GNDETPKPQKELAP) and 862–877 (VKAKPKTEAKETKAEE). Over residues 903-955 (ASEEEQGQAEEEEAESGEEEEEEEEEGEGEEEEEEEEEEEEEEEEGEEGEEQS) the composition is skewed to acidic residues. 2 coiled-coil regions span residues 903-957 (ASEE…QSEA) and 1233-1318 (MAAI…AARG). The Bipartite nuclear localization signal signature appears at 1345 to 1352 (EKRSGDID). Disordered stretches follow at residues 1385 to 1404 (ATPGGGGRSRESSPFVTPQS) and 1414 to 1443 (GSVGTATPRGLLAATGTPSPTKKKLSMYTA). The Bipartite nuclear localization signal signature appears at 1435-1442 (KKKLSMYT).

In terms of assembly, component of the nuclear pore complex (NPC). NPC constitutes the exclusive means of nucleocytoplasmic transport. NPCs allow the passive diffusion of ions and small molecules and the active, nuclear transport receptor-mediated bidirectional transport of macromolecules such as proteins, RNAs, ribonucleoparticles (RNPs), and ribosomal subunits across the nuclear envelope. Due to its 8-fold rotational symmetry, all subunits are present with 8 copies or multiples thereof.

The protein resides in the nucleus. Its subcellular location is the nuclear pore complex. It localises to the nucleus membrane. Its function is as follows. Functions as a component of the nuclear pore complex (NPC). NPC components, collectively referred to as nucleoporins (NUPs), can play the role of both NPC structural components and of docking or interaction partners for transiently associated nuclear transport factors. Active directional transport is assured by both, a Phe-Gly (FG) repeat affinity gradient for these transport factors across the NPC and a transport cofactor concentration gradient across the nuclear envelope (GSP1 and GSP2 GTPases associated predominantly with GTP in the nucleus, with GDP in the cytoplasm). NUP159 plays an important role in several nuclear export pathways including poly(A)+ RNA, pre-ribosome, and protein export. The chain is Nucleoporin NUP159 (NUP159) from Chaetomium thermophilum (strain DSM 1495 / CBS 144.50 / IMI 039719) (Thermochaetoides thermophila).